The primary structure comprises 234 residues: Leucyl/phenylalanyl-tRNA--protein transferase (234 aa).

This sequence belongs to the L/F-transferase family.

Its subcellular location is the cytoplasm. The enzyme catalyses N-terminal L-lysyl-[protein] + L-leucyl-tRNA(Leu) = N-terminal L-leucyl-L-lysyl-[protein] + tRNA(Leu) + H(+). The catalysed reaction is N-terminal L-arginyl-[protein] + L-leucyl-tRNA(Leu) = N-terminal L-leucyl-L-arginyl-[protein] + tRNA(Leu) + H(+). It catalyses the reaction L-phenylalanyl-tRNA(Phe) + an N-terminal L-alpha-aminoacyl-[protein] = an N-terminal L-phenylalanyl-L-alpha-aminoacyl-[protein] + tRNA(Phe). Functionally, functions in the N-end rule pathway of protein degradation where it conjugates Leu, Phe and, less efficiently, Met from aminoacyl-tRNAs to the N-termini of proteins containing an N-terminal arginine or lysine. The chain is Leucyl/phenylalanyl-tRNA--protein transferase from Salmonella agona (strain SL483).